Consider the following 91-residue polypeptide: Cell division topological specificity factor (91 aa).

The protein belongs to the MinE family.

Functionally, prevents the cell division inhibition by proteins MinC and MinD at internal division sites while permitting inhibition at polar sites. This ensures cell division at the proper site by restricting the formation of a division septum at the midpoint of the long axis of the cell. The protein is Cell division topological specificity factor of Chloroflexus aggregans (strain MD-66 / DSM 9485).